A 316-amino-acid chain; its full sequence is MKFSTLEHILIHLSFSICSIVITIRLINLVVTTILKPYDFSEKGIITTFLCLTGFLVTRWIYSGHFPLSNLYESLIFLSWSFSLIHIVAYLKKNKNLSRITASSTIFTQGFATSGLLTEINKSGILVPALQSEWLIMHVSMMILSYAALLCGSLLSAALLVITCRKKFNELLRLIESLSFDKIQYRNQRIHLFGKTYFFSVKNYYKIQLVQQLDYWSYRVISLGFIFLTMGILSGAVWANEAWGSYWSWDPKETWAFITWIIFAIYLHTRTNKNFWGANSAIVAVIGFLIIWICYFGVNLLGIGLHSYGSFKGMAS.

Transmembrane regions (helical) follow at residues 15–35, 44–64, 71–91, 142–162, 220–240, 247–267, and 281–301; these read FSIC…TTIL, GIIT…IYSG, LYES…VAYL, MILS…LLVI, VISL…VWAN, WSWD…AIYL, and AIVA…VNLL.

The protein belongs to the CcmF/CycK/Ccl1/NrfE/CcsA family. In terms of assembly, may interact with Ccs1.

Its subcellular location is the plastid. The protein resides in the chloroplast thylakoid membrane. Functionally, required during biogenesis of c-type cytochromes (cytochrome c6 and cytochrome f) at the step of heme attachment. This Trachelium caeruleum (Blue throatwort) protein is Cytochrome c biogenesis protein CcsA.